We begin with the raw amino-acid sequence, 404 residues long: Zinc metalloprotease Rip1 (404 aa).

A helical transmembrane segment spans residues 1–21; the sequence is MMFVTGIVLFALAILISVALH. A Zn(2+)-binding site is contributed by H21. The active site involves E22. A Zn(2+)-binding site is contributed by H25. Residues 104–124 form a helical membrane-spanning segment; the sequence is PGMNLAICLVLIYAIALVWGL. A PDZ domain is found at 121-203; sequence VWGLPNLHPP…SVPIVVERDG (83 aa). D202 serves as a coordination point for Zn(2+). The next 2 helical transmembrane spans lie at 313-333 and 373-393; these read LWVA…AINL and LLPA…LTVT.

The protein belongs to the peptidase M50B family. The cofactor is Zn(2+).

Its subcellular location is the cell membrane. A probable site-2 protease (S2P) that cleaves type-2 transmembrane proteins within their membrane-spanning domains. Degrades anti-sigma factors RskA, RslA and RsmA, releasing sigma factors SigK, SigL and SigM from the cellular membrane, activating signaling pathways. Does not act on RsdA. Regulates the composition of extractable mycolic acids in the cell envelope in response to changes in membrane fluidity. Mediates transcriptional regulation of mycolic acid biosynthetic genes in response to detergent. Probably also cleaves PbpB (PBP3, FtsI); this cleavage is inhibited by Wag31-PbpBI interaction. In terms of biological role, regulated intramembrane proteolysis (RIP) occurs when an extracytoplasmic signal (possibly oxidative stress) triggers a concerted proteolytic cascade to transmit information and elicit cellular responses. The membrane-spanning regulatory substrate protein (includes anti-sigma factors RskA, RslA, RsmA, and PbpB) is first cut extracytoplasmically (site-1 protease, S1P), then within the membrane itself (site-2 protease, S2P, this entry), while cytoplasmic proteases finish degrading the regulatory protein, liberating the effector protein (ECF sigma factors SigK, SigL and SigM). The chain is Zinc metalloprotease Rip1 (rip1) from Mycobacterium tuberculosis (strain ATCC 35801 / TMC 107 / Erdman).